The chain runs to 398 residues: Inositol polyphosphate 5-phosphatase (398 aa).

The protein belongs to the inositol 1,4,5-trisphosphate 5-phosphatase type II family. As to expression, expressed in tail, cilia, dendrites, axon and male head.

The protein resides in the cytoplasm. In terms of biological role, dephosphorylates a number of phosphatidylinositols. Controls the cellular levels and subcellular distribution of phosphatidylinositol 3,5-bisphosphate and phosphatidylinositol 3,4,5-trisphosphate. Has a role in sperm activation and motility. Influences the localization of the transient receptor potential polycystin (TRPP) complex proteins lov-1 and pkd-2. The sequence is that of Inositol polyphosphate 5-phosphatase from Caenorhabditis elegans.